Consider the following 301-residue polypeptide: Polyamine aminopropyltransferase (301 aa).

One can recognise a PABS domain in the interval 4–240 (WHWLLEWQTP…GLWGFVYGGV (237 aa)). Gln-33 contacts S-methyl-5'-thioadenosine. 2 residues coordinate spermidine: His-64 and Glu-89. Residues Asp-109 and 141-142 (DG) contribute to the S-methyl-5'-thioadenosine site. Asp-159 serves as the catalytic Proton acceptor.

It belongs to the spermidine/spermine synthase family. Homodimer or homotetramer.

The protein localises to the cytoplasm. It carries out the reaction S-adenosyl 3-(methylsulfanyl)propylamine + putrescine = S-methyl-5'-thioadenosine + spermidine + H(+). Its pathway is amine and polyamine biosynthesis; spermidine biosynthesis; spermidine from putrescine: step 1/1. Its function is as follows. Catalyzes the irreversible transfer of a propylamine group from the amino donor S-adenosylmethioninamine (decarboxy-AdoMet) to putrescine (1,4-diaminobutane) to yield spermidine. This chain is Polyamine aminopropyltransferase, found in Saccharolobus islandicus (strain L.S.2.15 / Lassen #1) (Sulfolobus islandicus).